A 305-amino-acid chain; its full sequence is Putative F-box protein PP2-B8 (305 aa).

In terms of domain architecture, F-box spans Val-33–Phe-79.

In Arabidopsis thaliana (Mouse-ear cress), this protein is Putative F-box protein PP2-B8 (PP2B8).